The chain runs to 218 residues: Glutathione S-transferase-like protein OpS6 (218 aa).

One can recognise a GST N-terminal domain in the interval 5–86; that stretch reads QPIKLYAHKK…YLIEQYDKDG (82 aa). The region spanning 92 to 218 is the GST C-terminal domain; the sequence is SLQDKSLARA…KIAATKAALA (127 aa).

This sequence belongs to the GST superfamily.

Its pathway is secondary metabolite biosynthesis. Functionally, glutathione S-transferase-like protein; part of the gene cluster that mediates the biosynthesis of the bibenzoquinone oosporein, a metabolite required for fungal virulence that acts by evading host immunity to facilitate fungal multiplication in insects. The non-reducing polyketide synthase OpS1 produces orsellinic acid by condensing acetyl-CoA with 3 malonyl-CoA units. Orsellinic acid is then hydroxylated to benzenetriol by the hydroxylase OpS4. The intermediate is oxidized either nonenzymatically to 5,5'-dideoxy-oosporein or enzymatically to benzenetetrol by the oxidoreductase OpS7. The latter is further dimerized to oosporein by the catalase OpS5. OpS6 probably functions en route for protecting cells against oxidative stress by scavenging any leaked free radical form of benzenetetrol by activating the thiol group of glutathione. The protein is Glutathione S-transferase-like protein OpS6 of Beauveria bassiana (strain ARSEF 2860) (White muscardine disease fungus).